The chain runs to 231 residues: GTP-binding protein RHO3 (231 aa).

Residue 23 to 30 coordinates GTP; sequence GDGACGKT. The short motif at 45-53 is the Effector region element; the sequence is YEPTVFENY. GTP contacts are provided by residues 70–74 and 128–131; these read DTAGQ and LKCD. A compositionally biased stretch (polar residues) spans 139–150; sequence SNAITPNNIQQD. Positions 139 to 165 are disordered; sequence SNAITPNNIQQDNSVSNDNGNNINSTS. Residues 151–165 are compositionally biased toward low complexity; that stretch reads NSVSNDNGNNINSTS. Cys228 is subject to Cysteine methyl ester. Cys228 is lipidated: S-farnesyl cysteine. Positions 229-231 are cleaved as a propeptide — removed in mature form; that stretch reads TIM.

This sequence belongs to the small GTPase superfamily. Rho family. In terms of assembly, interacts with TOS7.

The protein resides in the cell membrane. Activity is positively regulated by the GTPase activating protein (GAP) RGD1. Its function is as follows. Plays an important role in cell growth. Required to keep the uninucleated state. Modulates morphogenesis during bud growth via directing organization of the actin cytoskeleton and the position of the secretory machinery for exocytosis. The protein is GTP-binding protein RHO3 of Saccharomyces cerevisiae (strain ATCC 204508 / S288c) (Baker's yeast).